Consider the following 434-residue polypeptide: 3-phosphoshikimate 1-carboxyvinyltransferase (434 aa).

3-phosphoshikimate is bound by residues lysine 22, serine 23, and arginine 27. Position 22 (lysine 22) interacts with phosphoenolpyruvate. Positions 93 and 121 each coordinate phosphoenolpyruvate. Residues serine 168, serine 169, glutamine 170, serine 199, aspartate 320, and lysine 347 each coordinate 3-phosphoshikimate. Glutamine 170 lines the phosphoenolpyruvate pocket. Residue aspartate 320 is the Proton acceptor of the active site. Positions 351, 394, and 419 each coordinate phosphoenolpyruvate.

This sequence belongs to the EPSP synthase family. Monomer.

It localises to the cytoplasm. The enzyme catalyses 3-phosphoshikimate + phosphoenolpyruvate = 5-O-(1-carboxyvinyl)-3-phosphoshikimate + phosphate. The protein operates within metabolic intermediate biosynthesis; chorismate biosynthesis; chorismate from D-erythrose 4-phosphate and phosphoenolpyruvate: step 6/7. Functionally, catalyzes the transfer of the enolpyruvyl moiety of phosphoenolpyruvate (PEP) to the 5-hydroxyl of shikimate-3-phosphate (S3P) to produce enolpyruvyl shikimate-3-phosphate and inorganic phosphate. The polypeptide is 3-phosphoshikimate 1-carboxyvinyltransferase (Burkholderia cenocepacia (strain HI2424)).